The chain runs to 481 residues: Small ribosomal subunit protein bS1 (481 aa).

S1 motif domains lie at 36–105 (GDIV…LSKK), 123–188 (DEAV…LSRR), 209–277 (GAIR…LSLK), and 294–363 (GQIV…LSLK). Residues 437–465 (ATEEAGHGSSEQPPASSTPSAKATGGSLA) form a disordered region. Polar residues predominate over residues 445-457 (SSEQPPASSTPSA).

This sequence belongs to the bacterial ribosomal protein bS1 family.

In terms of biological role, binds mRNA; thus facilitating recognition of the initiation point. It is needed to translate mRNA with a short Shine-Dalgarno (SD) purine-rich sequence. This is Small ribosomal subunit protein bS1 (rpsA) from Mycobacterium leprae (strain TN).